We begin with the raw amino-acid sequence, 633 residues long: Shootin-1 (633 aa).

The residue at position 1 (Met1) is an N-acetylmethionine. A phosphoserine mark is found at Ser3 and Ser4. Residues 7 to 353 adopt a coiled-coil conformation; it reads EKQLQLITSL…RVNQSENSVP (347 aa). Residues Ser101 and Ser249 each carry the phosphoserine; by PAK1 modification. Positions 343-508 are disordered; the sequence is KRVNQSENSV…LATSESKSMP (166 aa). A compositionally biased stretch (pro residues) spans 352-369; that stretch reads VPPPPPPPPPLPPPPPNP. Phosphoserine is present on Ser375. A compositionally biased stretch (basic and acidic residues) spans 403 to 418; that stretch reads TDLKRQAVEEMMDRIK. Residues 456–465 are compositionally biased toward polar residues; it reads LNKSTSSRSL. Ser473 bears the Phosphoserine mark. Thr487 bears the Phosphothreonine mark. The segment covering 490 to 505 has biased composition (polar residues); it reads ADSSSPTGILATSESK. A Phosphoserine modification is found at Ser494. A Phosphothreonine modification is found at Thr496. A phosphoserine mark is found at Ser506 and Ser515. The tract at residues 525-633 is disordered; it reads TLEAEFNNPC…KTGETDSSNC (109 aa). Thr537 is subject to Phosphothreonine. Residues 550–559 show a composition bias toward polar residues; that stretch reads CTNSKVTFQP. Over residues 590–621 the composition is skewed to basic and acidic residues; it reads PQTKDQAAEKDPTQCKEEERGETQPEFKEDSS.

The protein belongs to the shootin family. As to quaternary structure, interacts with PFN2. Interacts (via N-terminus) with KIF20B; this interaction is direct and promotes the association of SHTN1 to microtubules in primary neurons. Associates with microtubule. Interacts with L1CAM; this interaction occurs in axonal growth cones. Interacts with actin filament retrograde flow; this interaction is enhanced in a netrin-1- and PAK1-dependent manner and promotes F-actin-substrate coupling and concomitant formation of traction forces at axonal growth cones. Interacts with RUFY3. Post-translationally, phosphorylated on Ser-101 and Ser-249 by PAK1 through a CDC42- and RAC1-dependent signaling pathway, which enhances its association with F-actin retrograde flow in filopodia and lamellipodia of axonal growth cones. Phosphorylation on Ser-101 and Ser-249 is increased by netrin-1. In terms of tissue distribution, brain-specific (at protein level). Expressed in hippocampal neurons.

It is found in the perikaryon. Its subcellular location is the cell projection. It localises to the axon. The protein localises to the growth cone. The protein resides in the cytoplasm. It is found in the cytoskeleton. Its subcellular location is the filopodium. It localises to the lamellipodium. Its function is as follows. Involved in the generation of internal asymmetric signals required for neuronal polarization and neurite outgrowth. Mediates netrin-1-induced F-actin-substrate coupling or 'clutch engagement' within the axon growth cone through activation of CDC42, RAC1 and PAK1-dependent signaling pathway, thereby converting the F-actin retrograde flow into traction forces, concomitantly with filopodium extension and axon outgrowth. Plays a role in cytoskeletal organization by regulating the subcellular localization of phosphoinositide 3-kinase (PI3K) activity at the axonal growth cone. Also plays a role in regenerative neurite outgrowth. In the developing cortex, cooperates with KIF20B to promote both the transition from the multipolar to the bipolar stage and the radial migration of cortical neurons from the ventricular zone toward the superficial layer of the neocortex. Involved in the accumulation of phosphatidylinositol 3,4,5-trisphosphate (PIP3) in the growth cone of primary hippocampal neurons. The chain is Shootin-1 from Rattus norvegicus (Rat).